Consider the following 297-residue polypeptide: 33 kDa chaperonin (297 aa).

Intrachain disulfides connect C239–C241 and C272–C275.

It belongs to the HSP33 family. Under oxidizing conditions two disulfide bonds are formed involving the reactive cysteines. Under reducing conditions zinc is bound to the reactive cysteines and the protein is inactive.

It localises to the cytoplasm. Redox regulated molecular chaperone. Protects both thermally unfolding and oxidatively damaged proteins from irreversible aggregation. Plays an important role in the bacterial defense system toward oxidative stress. This is 33 kDa chaperonin from Synechococcus elongatus (strain ATCC 33912 / PCC 7942 / FACHB-805) (Anacystis nidulans R2).